The following is a 67-amino-acid chain: Kappa-scoloptoxin(04)-Ssd1b (67 aa).

The N-terminal stretch at 1-24 (MKKTCVVSVFLVLLLLKFHDLSMG) is a signal peptide. Residues 25–36 (EEISPLKKVARR) constitute a propeptide that is removed on maturation. 2 disulfides stabilise this stretch: Cys44/Cys55 and Cys49/Cys62.

Expressed by the venom gland.

The protein localises to the secreted. The chain is Kappa-scoloptoxin(04)-Ssd1b from Scolopendra dehaani (Thai centipede).